The sequence spans 473 residues: Sensor histidine kinase GtrS (473 aa).

Topologically, residues 1–8 (MPRSLLGR) are cytoplasmic. A helical transmembrane segment spans residues 9-29 (MLLLTLLAVLVAQGLSSLFWL). The Periplasmic portion of the chain corresponds to 30–197 (SHLRSSQREG…LEPEGLQPQQ (168 aa)). The helical transmembrane segment at 198-218 (VLSIVFTSLLLLLFTGLLMHW) threads the bilayer. The HAMP domain occupies 217–269 (HWQSRPLKRLARAARDLALGSPSAALEERGASELVEVARAFNTMHERIDRYLN). At 219-473 (QSRPLKRLAR…SLRLPRLGLE (255 aa)) the chain is on the cytoplasmic side. The region spanning 277 to 471 (AISHDLRTPI…RVSLRLPRLG (195 aa)) is the Histidine kinase domain. At His-280 the chain carries Phosphohistidine; by autocatalysis.

Post-translationally, autophosphorylated.

It localises to the cell inner membrane. It catalyses the reaction ATP + protein L-histidine = ADP + protein N-phospho-L-histidine.. In terms of biological role, member of the two-component regulatory system GtrS/GltR involved in the regulation of glucose metabolism and transport, as well as regulation of the exotoxin A gene expression. GtrS recognizes and binds 2-ketogluconate and 6-phosphogluconate via its sensor domain, which accelerates GtrS autophosphorylation and concomitant transphosphorylation and regulation of the response regulator GltR. Functionally, plays a key role during bacteria-host interactions and is required for optimal colonization and dissemination in a mouse model of infection. Contributes to modulation of the type III secretion system (T3SS) in response to host cells via the regulation of the OprB transport system. This Pseudomonas aeruginosa (strain ATCC 15692 / DSM 22644 / CIP 104116 / JCM 14847 / LMG 12228 / 1C / PRS 101 / PAO1) protein is Sensor histidine kinase GtrS.